The chain runs to 786 residues: Endonuclease MutS2 (786 aa).

Residue 334–341 participates in ATP binding; sequence GPNTGGKT. The region spanning 711–786 is the Smr domain; the sequence is LDLRGERYEN…GNGATVVYFK (76 aa).

The protein belongs to the DNA mismatch repair MutS family. MutS2 subfamily. Homodimer. Binds to stalled ribosomes, contacting rRNA.

In terms of biological role, endonuclease that is involved in the suppression of homologous recombination and thus may have a key role in the control of bacterial genetic diversity. Its function is as follows. Acts as a ribosome collision sensor, splitting the ribosome into its 2 subunits. Detects stalled/collided 70S ribosomes which it binds and splits by an ATP-hydrolysis driven conformational change. Acts upstream of the ribosome quality control system (RQC), a ribosome-associated complex that mediates the extraction of incompletely synthesized nascent chains from stalled ribosomes and their subsequent degradation. Probably generates substrates for RQC. In Ligilactobacillus salivarius (strain UCC118) (Lactobacillus salivarius), this protein is Endonuclease MutS2.